The chain runs to 431 residues: Histidine--tRNA ligase (431 aa).

Belongs to the class-II aminoacyl-tRNA synthetase family. Homodimer.

It localises to the cytoplasm. It carries out the reaction tRNA(His) + L-histidine + ATP = L-histidyl-tRNA(His) + AMP + diphosphate + H(+). The protein is Histidine--tRNA ligase of Finegoldia magna (strain ATCC 29328 / DSM 20472 / WAL 2508) (Peptostreptococcus magnus).